Here is a 136-residue protein sequence, read N- to C-terminus: Basic phospholipase A2 Tgc-K49 (136 aa).

The N-terminal stretch at 1–15 (MRTLWIVAVLLVGEG) is a signal peptide. 7 cysteine pairs are disulfide-bonded: cysteine 41/cysteine 130, cysteine 43/cysteine 59, cysteine 58/cysteine 110, cysteine 64/cysteine 136, cysteine 65/cysteine 103, cysteine 72/cysteine 96, and cysteine 90/cysteine 101. The active site involves histidine 62. Aspartate 104 is a catalytic residue.

Belongs to the phospholipase A2 family. Group II subfamily. K49 sub-subfamily. Expressed by the venom gland.

It is found in the secreted. The catalysed reaction is a 1,2-diacyl-sn-glycero-3-phosphocholine + H2O = a 1-acyl-sn-glycero-3-phosphocholine + a fatty acid + H(+). Its function is as follows. PLA2 catalyzes the calcium-dependent hydrolysis of the 2-acyl groups in 3-sn-phosphoglycerides. The sequence is that of Basic phospholipase A2 Tgc-K49 from Trimeresurus gracilis (Kikuchi habu).